The primary structure comprises 588 residues: Proteasome-associated ATPase (588 aa).

Positions 1–10 are enriched in basic and acidic residues; that stretch reads MAAHDDDINR. A disordered region spans residues 1-22; the sequence is MAAHDDDINRGTRPARGSEDPA. Residues 47 to 94 are a coiled coil; that stretch reads RILEERIVELQTNLAGVSAQNERLANTLREARDQIVALKEEVDRLAQP. 276–281 provides a ligand contact to ATP; the sequence is GCGKTL. A docks into pockets in the proteasome alpha-ring region spans residues 587–588; that stretch reads YL.

Belongs to the AAA ATPase family. Homohexamer. Assembles into a hexameric ring structure that caps the 20S proteasome core. Strongly interacts with the prokaryotic ubiquitin-like protein Pup through a hydrophobic interface; the interacting region of ARC lies in its N-terminal coiled-coil domain. There is one Pup binding site per ARC hexamer ring. Upon ATP-binding, the C-terminus of ARC interacts with the alpha-rings of the proteasome core, possibly by binding to the intersubunit pockets.

Its pathway is protein degradation; proteasomal Pup-dependent pathway. In terms of biological role, ATPase which is responsible for recognizing, binding, unfolding and translocation of pupylated proteins into the bacterial 20S proteasome core particle. May be essential for opening the gate of the 20S proteasome via an interaction with its C-terminus, thereby allowing substrate entry and access to the site of proteolysis. Thus, the C-termini of the proteasomal ATPase may function like a 'key in a lock' to induce gate opening and therefore regulate proteolysis. This Streptomyces griseus subsp. griseus (strain JCM 4626 / CBS 651.72 / NBRC 13350 / KCC S-0626 / ISP 5235) protein is Proteasome-associated ATPase.